A 374-amino-acid chain; its full sequence is Lactoyl-CoA dehydratase subunit beta (374 aa).

It belongs to the FldB/FldC dehydratase alpha/beta subunit family. In terms of assembly, heterodimer of an alpha (LcdA) and a beta (LcdB) subunit. Requires [4Fe-4S] cluster as cofactor. FMN serves as cofactor. Riboflavin is required as a cofactor. The cofactor is Mg(2+).

The enzyme catalyses (R)-lactoyl-CoA = acryloyl-CoA + H2O. The catalysed reaction is (2R)-hydroxybutanoyl-CoA = (2E)-butenoyl-CoA + H2O. With respect to regulation, activated by the LcdC protein. Involved in the acrylate pathway for the conversion of D-lactic acid to propionic acid. Catalyzes the reversible dehydration of Lactoyl-CoA and 2-hydroxybutyroyl-CoA to acryloyl-CoA and crotonyl-CoA, respectively. In Anaerotignum propionicum (Clostridium propionicum), this protein is Lactoyl-CoA dehydratase subunit beta (lcdB).